A 332-amino-acid chain; its full sequence is Biotin synthase (332 aa).

One can recognise a Radical SAM core domain in the interval 53–282; sequence HFGKKVKLNM…TKEIRISGGR (230 aa). [4Fe-4S] cluster-binding residues include cysteine 71, cysteine 75, and cysteine 78. Positions 115, 147, 207, and 277 each coordinate [2Fe-2S] cluster.

Belongs to the radical SAM superfamily. Biotin synthase family. Homodimer. [4Fe-4S] cluster is required as a cofactor. The cofactor is [2Fe-2S] cluster.

It carries out the reaction (4R,5S)-dethiobiotin + (sulfur carrier)-SH + 2 reduced [2Fe-2S]-[ferredoxin] + 2 S-adenosyl-L-methionine = (sulfur carrier)-H + biotin + 2 5'-deoxyadenosine + 2 L-methionine + 2 oxidized [2Fe-2S]-[ferredoxin]. The protein operates within cofactor biosynthesis; biotin biosynthesis; biotin from 7,8-diaminononanoate: step 2/2. Functionally, catalyzes the conversion of dethiobiotin (DTB) to biotin by the insertion of a sulfur atom into dethiobiotin via a radical-based mechanism. This is Biotin synthase from Bacillus cereus (strain ATCC 10987 / NRS 248).